A 141-amino-acid polypeptide reads, in one-letter code: ATP synthase F(0) complex subunit C3, mitochondrial (141 aa).

The transit peptide at 1–66 (MFACAKLART…REFQTSVISR (66 aa)) directs the protein to the mitochondrion. The helical transmembrane segment at 82-102 (VGVAGSGAGIGTVFGSLIIGY) threads the bilayer. K109 is modified (N6,N6,N6-trimethyllysine). The chain crosses the membrane as a helical span at residues 117–137 (ILGFALSEAMGLFCLMVAFLI).

Belongs to the ATPase C chain family. F-type ATPases have 2 components, CF(1) - the catalytic core - and CF(0) - the membrane proton channel. CF(1) has five subunits: alpha(3), beta(3), gamma(1), delta(1), epsilon(1). CF(0) has three main subunits: a, b and c. Interacts with TMEM70 and TMEM242. Post-translationally, trimethylated by ATPSCKMT at Lys-109. Methylation is required for proper incorporation of the C subunit into the ATP synthase complex and mitochondrial respiration.

The protein resides in the mitochondrion membrane. Mitochondrial membrane ATP synthase (F(1)F(0) ATP synthase or Complex V) produces ATP from ADP in the presence of a proton gradient across the membrane which is generated by electron transport complexes of the respiratory chain. F-type ATPases consist of two structural domains, F(1) - containing the extramembraneous catalytic core and F(0) - containing the membrane proton channel, linked together by a central stalk and a peripheral stalk. During catalysis, ATP synthesis in the catalytic domain of F(1) is coupled via a rotary mechanism of the central stalk subunits to proton translocation. Part of the complex F(0) domain. A homomeric c-ring of probably 10 subunits is part of the complex rotary element. The polypeptide is ATP synthase F(0) complex subunit C3, mitochondrial (Mus musculus (Mouse)).